A 330-amino-acid polypeptide reads, in one-letter code: Probable UDP-3-O-acylglucosamine N-acyltransferase 1, mitochondrial (330 aa).

The transit peptide at 1-52 directs the protein to the mitochondrion; it reads MANSLRTLFSVSTHGVFLNKRSSYRVRKVFVGMPLRICSEIPRFVSVSCIRS. Residue 160-162 participates in UDP-N-acetyl-alpha-D-glucosamine binding; the sequence is FGF. 2 residues coordinate hexadecanoate: D210 and Q214. H217 (proton acceptor) is an active-site residue. UDP-N-acetyl-alpha-D-glucosamine contacts are provided by N218, S236, and H254.

This sequence belongs to the transferase hexapeptide repeat family. LpxD subfamily. In terms of assembly, homotrimer.

It is found in the mitochondrion. It catalyses the reaction a UDP-3-O-[(3R)-3-hydroxyacyl]-alpha-D-glucosamine + a (3R)-hydroxyacyl-[ACP] = a UDP-2-N,3-O-bis[(3R)-3-hydroxyacyl]-alpha-D-glucosamine + holo-[ACP] + H(+). Its pathway is glycolipid biosynthesis; lipid IV(A) biosynthesis; lipid IV(A) from (3R)-3-hydroxytetradecanoyl-[acyl-carrier-protein] and UDP-N-acetyl-alpha-D-glucosamine: step 3/6. Involved in the biosynthesis of lipid A, a phosphorylated glycolipid that in bacteria anchors the lipopolysaccharide to the outer membrane of the cell. Lipid A-like molecules in plants may serve as structural components of the outer membranes of mitochondria and/or chloroplasts, or may be involved in signal transduction or plant defense responses. The chain is Probable UDP-3-O-acylglucosamine N-acyltransferase 1, mitochondrial (LPXD1) from Arabidopsis thaliana (Mouse-ear cress).